The sequence spans 352 residues: Replication factor C subunit 5 (352 aa).

Belongs to the activator 1 small subunits family. Heteropentamer of subunits rfc1, rfc2, rfc3, rfc4 and rfc5 that forms a complex with PCNA in the presence of ATP.

It is found in the nucleus. The elongation of primed DNA templates by DNA polymerase delta and epsilon requires the action of the accessory proteins proliferating cell nuclear antigen (PCNA) and activator 1. This Neurospora crassa (strain ATCC 24698 / 74-OR23-1A / CBS 708.71 / DSM 1257 / FGSC 987) protein is Replication factor C subunit 5.